Consider the following 231-residue polypeptide: 7-cyano-7-deazaguanine synthase (231 aa).

11-21 serves as a coordination point for ATP; it reads LSAGLDSTVNA. Zn(2+)-binding residues include cysteine 197, cysteine 205, cysteine 208, and cysteine 211.

It belongs to the QueC family. Zn(2+) is required as a cofactor.

It catalyses the reaction 7-carboxy-7-deazaguanine + NH4(+) + ATP = 7-cyano-7-deazaguanine + ADP + phosphate + H2O + H(+). It participates in purine metabolism; 7-cyano-7-deazaguanine biosynthesis. Functionally, catalyzes the ATP-dependent conversion of 7-carboxy-7-deazaguanine (CDG) to 7-cyano-7-deazaguanine (preQ(0)). The protein is 7-cyano-7-deazaguanine synthase of Bdellovibrio bacteriovorus (strain ATCC 15356 / DSM 50701 / NCIMB 9529 / HD100).